Consider the following 131-residue polypeptide: Small ribosomal subunit protein uS11 (131 aa).

Belongs to the universal ribosomal protein uS11 family. Part of the 30S ribosomal subunit. Interacts with proteins S7 and S18. Binds to IF-3.

Functionally, located on the platform of the 30S subunit, it bridges several disparate RNA helices of the 16S rRNA. Forms part of the Shine-Dalgarno cleft in the 70S ribosome. This chain is Small ribosomal subunit protein uS11, found in Dictyoglomus turgidum (strain DSM 6724 / Z-1310).